The chain runs to 3065 residues: MAX gene-associated protein (3065 aa).

Residues Lys4 and Lys178 each participate in a glycyl lysine isopeptide (Lys-Gly) (interchain with G-Cter in SUMO2) cross-link. Positions Met84–Asp260 form a DNA-binding region, T-box. Residues Arg259–Ser277 show a composition bias toward basic and acidic residues. The interval Arg259–Glu322 is disordered. A compositionally biased stretch (polar residues) spans Asp278–Gly289. The span at Pro309–Glu322 shows a compositional bias: basic and acidic residues. Glycyl lysine isopeptide (Lys-Gly) (interchain with G-Cter in SUMO2) cross-links involve residues Lys323, Lys329, Lys349, Lys432, Lys460, Lys465, and Lys482. The residue at position 534 (Ser534) is a Phosphoserine. A Glycyl lysine isopeptide (Lys-Gly) (interchain with G-Cter in SUMO2) cross-link involves residue Lys570. The interval Gln604–Val653 is disordered. Ser607 bears the Phosphoserine mark. Residue Lys613 forms a Glycyl lysine isopeptide (Lys-Gly) (interchain with G-Cter in SUMO2) linkage. A compositionally biased stretch (basic residues) spans Lys613–Lys624. A compositionally biased stretch (polar residues) spans Thr632–Ser648. A Phosphoserine modification is found at Ser645. Residues Lys654, Lys785, Lys791, Lys817, and Lys826 each participate in a glycyl lysine isopeptide (Lys-Gly) (interchain with G-Cter in SUMO2) cross-link. At Ser851 the chain carries Phosphoserine. The segment at Ser881 to Thr911 is disordered. Residues Gln901–Thr911 are compositionally biased toward polar residues. Ser924 bears the Phosphoserine mark. Residue Lys928 forms a Glycyl lysine isopeptide (Lys-Gly) (interchain with G-Cter in SUMO2) linkage. A disordered region spans residues Arg971 to Lys990. Positions Gln972 to Gln981 are enriched in low complexity. Residues Lys990, Lys1091, Lys1140, Lys1162, Lys1199, and Lys1207 each participate in a glycyl lysine isopeptide (Lys-Gly) (interchain with G-Cter in SUMO2) cross-link. Positions Tyr1111–Glu1147 form a coiled coil. Ser1208 carries the phosphoserine modification. Disordered regions lie at residues Arg1246–Pro1332 and Arg1380–Ile1429. Low complexity-rich tracts occupy residues Gln1253 to Ser1269 and Lys1310 to Ser1322. 2 positions are modified to phosphoserine: Ser1430 and Ser1457. Residues Lys1461 and Lys1502 each participate in a glycyl lysine isopeptide (Lys-Gly) (interchain with G-Cter in SUMO2) cross-link. 3 disordered regions span residues Ser1488–Asn1517, Ser1905–Gly1927, and Gln1967–Gly2029. Polar residues-rich tracts occupy residues Leu1495–Pro1514 and Ser1911–Gly1927. A compositionally biased stretch (basic and acidic residues) spans Met1968–Leu1994. Residues Lys1985 and Lys1992 each participate in a glycyl lysine isopeptide (Lys-Gly) (interchain with G-Cter in SUMO2) cross-link. Residues Ile2008 to Asp2023 show a composition bias toward polar residues. Glycyl lysine isopeptide (Lys-Gly) (interchain with G-Cter in SUMO2) cross-links involve residues Lys2103, Lys2113, Lys2135, Lys2139, Lys2146, Lys2159, Lys2194, Lys2206, and Lys2238. The disordered stretch occupies residues Arg2258–Ile2316. An Omega-N-methylarginine modification is found at Arg2265. A Glycyl lysine isopeptide (Lys-Gly) (interchain with G-Cter in SUMO2) cross-link involves residue Lys2284. Over residues Asp2300–Ile2316 the composition is skewed to acidic residues. Residues Lys2378, Lys2413, Lys2457, and Lys2532 each participate in a glycyl lysine isopeptide (Lys-Gly) (interchain with G-Cter in SUMO2) cross-link. A bHLH domain is found at Tyr2423 to Leu2474. Ser2541 carries the phosphoserine modification. Lys2546 is covalently cross-linked (Glycyl lysine isopeptide (Lys-Gly) (interchain with G-Cter in SUMO2)). Residues Lys2576–Asn2595 form a disordered region. Polar residues predominate over residues Thr2581–Asn2595. Residues Lys2629, Lys2679, Lys2698, and Lys2784 each participate in a glycyl lysine isopeptide (Lys-Gly) (interchain with G-Cter in SUMO2) cross-link. The disordered stretch occupies residues Gly2668 to Gly2709. The segment covering Tyr2671–Gly2709 has biased composition (basic and acidic residues). Residues Asp2817–Ser2841 are a coiled coil. Ser2910 and Ser2921 each carry phosphoserine. Residues Ala2944–His2968 are disordered. Ser2978 is subject to Phosphoserine. A Glycyl lysine isopeptide (Lys-Gly) (interchain with G-Cter in SUMO2) cross-link involves residue Lys3041.

Interacts with MAX. Requires dimerization with MAX for E-box binding. Component of some MLL1/MLL complex, at least composed of the core components KMT2A/MLL1, ASH2L, HCFC1/HCF1, WDR5 and RBBP5, as well as the facultative components BACC1, CHD8, E2F6, HSP70, INO80C, KANSL1, LAS1L, MAX, MCRS1, MGA, MYST1/MOF, PELP1, PHF20, PRP31, RING2, RUVB1/TIP49A, RUVB2/TIP49B, SENP3, TAF1, TAF4, TAF6, TAF7, TAF9 and TEX10. Interacts with ZMYND11. In terms of tissue distribution, highly expressed in germ cells and granulosa cells.

Its subcellular location is the nucleus. In terms of biological role, functions as a dual-specificity transcription factor, regulating the expression of both MAX-network and T-box family target genes. Functions as a repressor or an activator. Binds to 5'-AATTTCACACCTAGGTGTGAAATT-3' core sequence and seems to regulate MYC-MAX target genes. Suppresses transcriptional activation by MYC and inhibits MYC-dependent cell transformation. Function activated by heterodimerization with MAX. This heterodimerization serves the dual function of both generating an E-box-binding heterodimer and simultaneously blocking interaction of a corepressor. The chain is MAX gene-associated protein from Homo sapiens (Human).